Consider the following 427-residue polypeptide: 3-phosphoshikimate 1-carboxyvinyltransferase (427 aa).

3-phosphoshikimate is bound by residues Lys-22, Ser-23, and Arg-27. Phosphoenolpyruvate is bound at residue Lys-22. Positions 96 and 124 each coordinate phosphoenolpyruvate. The 3-phosphoshikimate site is built by Ser-169, Ser-170, Gln-171, Ser-197, Asp-313, Asn-336, and Lys-340. Position 171 (Gln-171) interacts with phosphoenolpyruvate. Asp-313 serves as the catalytic Proton acceptor. 3 residues coordinate phosphoenolpyruvate: Arg-344, Arg-386, and Lys-411.

Belongs to the EPSP synthase family. Monomer.

The protein resides in the cytoplasm. It carries out the reaction 3-phosphoshikimate + phosphoenolpyruvate = 5-O-(1-carboxyvinyl)-3-phosphoshikimate + phosphate. Its pathway is metabolic intermediate biosynthesis; chorismate biosynthesis; chorismate from D-erythrose 4-phosphate and phosphoenolpyruvate: step 6/7. In terms of biological role, catalyzes the transfer of the enolpyruvyl moiety of phosphoenolpyruvate (PEP) to the 5-hydroxyl of shikimate-3-phosphate (S3P) to produce enolpyruvyl shikimate-3-phosphate and inorganic phosphate. This is 3-phosphoshikimate 1-carboxyvinyltransferase from Shigella flexneri serotype 5b (strain 8401).